A 592-amino-acid chain; its full sequence is A-type ATP synthase subunit A (592 aa).

234 to 241 (GPFGSGKT) lines the ATP pocket.

The protein belongs to the ATPase alpha/beta chains family. In terms of assembly, has multiple subunits with at least A(3), B(3), C, D, E, F, H, I and proteolipid K(x).

Its subcellular location is the cell membrane. The catalysed reaction is ATP + H2O + 4 H(+)(in) = ADP + phosphate + 5 H(+)(out). Functionally, produces ATP from ADP in the presence of a proton gradient across the membrane. The archaeal alpha chain is a catalytic subunit. Component of the A-type ATP synthase that produces ATP from ADP in the presence of a proton gradient across the membrane. The A chain is the catalytic subunit. This Sulfolobus acidocaldarius (strain ATCC 33909 / DSM 639 / JCM 8929 / NBRC 15157 / NCIMB 11770) protein is A-type ATP synthase subunit A.